A 375-amino-acid chain; its full sequence is Alanine racemase (375 aa).

Residue lysine 45 is the Proton acceptor; specific for D-alanine of the active site. Lysine 45 is modified (N6-(pyridoxal phosphate)lysine). Residue arginine 141 participates in substrate binding. The Proton acceptor; specific for L-alanine role is filled by tyrosine 270. Methionine 318 is a substrate binding site.

Belongs to the alanine racemase family. It depends on pyridoxal 5'-phosphate as a cofactor.

The enzyme catalyses L-alanine = D-alanine. It participates in amino-acid biosynthesis; D-alanine biosynthesis; D-alanine from L-alanine: step 1/1. Functionally, catalyzes the interconversion of L-alanine and D-alanine. May also act on other amino acids. In Pseudoalteromonas atlantica (strain T6c / ATCC BAA-1087), this protein is Alanine racemase (alr).